The following is a 201-amino-acid chain: IMP cyclohydrolase (201 aa).

The protein belongs to the archaeal IMP cyclohydrolase family.

The catalysed reaction is IMP + H2O = 5-formamido-1-(5-phospho-D-ribosyl)imidazole-4-carboxamide. Its pathway is purine metabolism; IMP biosynthesis via de novo pathway; IMP from 5-formamido-1-(5-phospho-D-ribosyl)imidazole-4-carboxamide: step 1/1. Functionally, catalyzes the cyclization of 5-formylamidoimidazole-4-carboxamide ribonucleotide to IMP. The sequence is that of IMP cyclohydrolase from Methanococcus maripaludis (strain DSM 14266 / JCM 13030 / NBRC 101832 / S2 / LL).